Here is a 260-residue protein sequence, read N- to C-terminus: Aliphatic sulfonates import ATP-binding protein SsuB 1 (260 aa).

The ABC transporter domain maps to 29–243 (VRVDGLTRSF…DITDPRFAEL (215 aa)). 61 to 68 (GRSGCGKS) lines the ATP pocket.

This sequence belongs to the ABC transporter superfamily. Aliphatic sulfonates importer (TC 3.A.1.17.2) family. As to quaternary structure, the complex is composed of two ATP-binding proteins (SsuB), two transmembrane proteins (SsuC) and a solute-binding protein (SsuA).

It localises to the cell membrane. The catalysed reaction is ATP + H2O + aliphatic sulfonate-[sulfonate-binding protein]Side 1 = ADP + phosphate + aliphatic sulfonateSide 2 + [sulfonate-binding protein]Side 1.. Functionally, part of the ABC transporter complex SsuABC involved in aliphatic sulfonates import. Responsible for energy coupling to the transport system. This is Aliphatic sulfonates import ATP-binding protein SsuB 1 from Streptomyces avermitilis (strain ATCC 31267 / DSM 46492 / JCM 5070 / NBRC 14893 / NCIMB 12804 / NRRL 8165 / MA-4680).